A 113-amino-acid chain; its full sequence is MNTVRVTFLLVFVLAVSLGQADKDENRMEMQEKTEQGKSYLDFAENLLLQKLEELEAKLLEEDSEESRNSRQKRCIGEGVPCDENVPRCCSGLVCLKPTLHGIWYKSYYCYKK.

A signal peptide spans 1 to 21; the sequence is MNTVRVTFLLVFVLAVSLGQA. The propeptide occupies 22–74; that stretch reads DKDENRMEMQEKTEQGKSYLDFAENLLLQKLEELEAKLLEEDSEESRNSRQKR. Cystine bridges form between cysteine 75–cysteine 90, cysteine 82–cysteine 95, and cysteine 89–cysteine 110.

Belongs to the neurotoxin 14 (magi-1) family. 01 (HNTX-16) subfamily. Expressed by the venom gland.

The protein resides in the secreted. Probable ion channel inhibitor. The chain is U11-theraphotoxin-Hhn1u from Cyriopagopus hainanus (Chinese bird spider).